The primary structure comprises 326 residues: GTP 3',8-cyclase (326 aa).

Positions 7 to 232 (GFGRSFPYLR…PRAADAGPAR (226 aa)) constitute a Radical SAM core domain. Arg16 serves as a coordination point for GTP. Residues Cys23 and Cys27 each coordinate [4Fe-4S] cluster. Position 29 (Tyr29) interacts with S-adenosyl-L-methionine. [4Fe-4S] cluster is bound at residue Cys30. Arg65 is a binding site for GTP. Gly69 is a binding site for S-adenosyl-L-methionine. Thr96 serves as a coordination point for GTP. Ser120 serves as a coordination point for S-adenosyl-L-methionine. Position 157 (Lys157) interacts with GTP. Met191 provides a ligand contact to S-adenosyl-L-methionine. [4Fe-4S] cluster is bound by residues Cys254 and Cys257. A GTP-binding site is contributed by 259–261 (RLR). Cys271 lines the [4Fe-4S] cluster pocket.

It belongs to the radical SAM superfamily. MoaA family. Monomer and homodimer. [4Fe-4S] cluster serves as cofactor.

The catalysed reaction is GTP + AH2 + S-adenosyl-L-methionine = (8S)-3',8-cyclo-7,8-dihydroguanosine 5'-triphosphate + 5'-deoxyadenosine + L-methionine + A + H(+). It functions in the pathway cofactor biosynthesis; molybdopterin biosynthesis. In terms of biological role, catalyzes the cyclization of GTP to (8S)-3',8-cyclo-7,8-dihydroguanosine 5'-triphosphate. The polypeptide is GTP 3',8-cyclase (Stenotrophomonas maltophilia (strain K279a)).